Here is a 192-residue protein sequence, read N- to C-terminus: Ion-translocating oxidoreductase complex subunit A (192 aa).

Transmembrane regions (helical) follow at residues 5–25 (LLLL…FLGL), 39–59 (IGMS…SYLV), 65–85 (LPFE…AVVV), 102–122 (ALGI…VALL), 134–154 (AIYG…FSAM), and 171–191 (AIAM…TGLV).

This sequence belongs to the NqrDE/RnfAE family. The complex is composed of six subunits: RnfA, RnfB, RnfC, RnfD, RnfE and RnfG.

The protein localises to the cell inner membrane. Functionally, part of a membrane-bound complex that couples electron transfer with translocation of ions across the membrane. The sequence is that of Ion-translocating oxidoreductase complex subunit A from Shewanella sediminis (strain HAW-EB3).